A 156-amino-acid chain; its full sequence is MKVIEGGFPAPNAKIAIVISRFNSFINESLLSGAIDTLKRHGQVSEDNITVVRCPGAVELPLVAQRVAKTGKFDAIVSLGSVIRGGTPHFDYVCSEMNKGLAQVSLEFSIPVAFGVLTVDTIDQAIERAGTKAGNKGAEAALSALEMINVLSEIDS.

5-amino-6-(D-ribitylamino)uracil contacts are provided by residues Phe-22, 57-59, and 81-83; these read AVE and SVI. A (2S)-2-hydroxy-3-oxobutyl phosphate-binding site is contributed by 86–87; it reads GT. The Proton donor role is filled by His-89. Phe-114 provides a ligand contact to 5-amino-6-(D-ribitylamino)uracil. Arg-128 is a binding site for (2S)-2-hydroxy-3-oxobutyl phosphate.

It belongs to the DMRL synthase family. In terms of assembly, forms an icosahedral capsid composed of 60 subunits, arranged as a dodecamer of pentamers.

The enzyme catalyses (2S)-2-hydroxy-3-oxobutyl phosphate + 5-amino-6-(D-ribitylamino)uracil = 6,7-dimethyl-8-(1-D-ribityl)lumazine + phosphate + 2 H2O + H(+). It participates in cofactor biosynthesis; riboflavin biosynthesis; riboflavin from 2-hydroxy-3-oxobutyl phosphate and 5-amino-6-(D-ribitylamino)uracil: step 1/2. Catalyzes the formation of 6,7-dimethyl-8-ribityllumazine by condensation of 5-amino-6-(D-ribitylamino)uracil with 3,4-dihydroxy-2-butanone 4-phosphate. This is the penultimate step in the biosynthesis of riboflavin. The protein is 6,7-dimethyl-8-ribityllumazine synthase of Vibrio vulnificus (strain CMCP6).